Here is a 330-residue protein sequence, read N- to C-terminus: Zinc finger protein sdz-12 (330 aa).

C2H2-type zinc fingers lie at residues Pro-27–His-48, Phe-63–His-85, Lys-91–His-113, Phe-120–His-144, and Ala-153–His-176. Low complexity predominate over residues Ser-183–Pro-195. The interval Ser-183–Ser-203 is disordered. The segment at Phe-271 to His-293 adopts a C2H2-type 6 zinc-finger fold.

Belongs to the krueppel C2H2-type zinc-finger protein family. As to expression, expressed in the somatic gonad.

In terms of biological role, together with ehn-3, may play a role in gonadogenesis. The polypeptide is Zinc finger protein sdz-12 (Caenorhabditis elegans).